The primary structure comprises 351 residues: Spermidine/putrescine import ATP-binding protein PotA (351 aa).

In terms of domain architecture, ABC transporter spans Leu-6–Ile-236. Position 38–45 (Gly-38–Thr-45) interacts with ATP.

Belongs to the ABC transporter superfamily. Spermidine/putrescine importer (TC 3.A.1.11.1) family. In terms of assembly, the complex is composed of two ATP-binding proteins (PotA), two transmembrane proteins (PotB and PotC) and a solute-binding protein (PotD).

Its subcellular location is the cell membrane. The catalysed reaction is ATP + H2O + polyamine-[polyamine-binding protein]Side 1 = ADP + phosphate + polyamineSide 2 + [polyamine-binding protein]Side 1.. Functionally, part of the ABC transporter complex PotABCD involved in spermidine/putrescine import. Responsible for energy coupling to the transport system. The chain is Spermidine/putrescine import ATP-binding protein PotA from Mycoplasma capricolum subsp. capricolum (strain California kid / ATCC 27343 / NCTC 10154).